We begin with the raw amino-acid sequence, 35 residues long: Leukocyte cysteine proteinase inhibitor 2 (35 aa).

The disordered stretch occupies residues 1-35; sequence LAGGLTEPRPADTEIQEIANKVKPQLEEKTNKKYD. Over residues 24–35 the composition is skewed to basic and acidic residues; it reads PQLEEKTNKKYD.

This sequence belongs to the cystatin family.

It localises to the cytoplasm. Potent inhibitor of cathepsins L and S, and papain. The protein is Leukocyte cysteine proteinase inhibitor 2 of Sus scrofa (Pig).